A 369-amino-acid polypeptide reads, in one-letter code: 4-hydroxy-3-methylbut-2-en-1-yl diphosphate synthase (flavodoxin) (369 aa).

The [4Fe-4S] cluster site is built by cysteine 270, cysteine 273, cysteine 305, and glutamate 312.

The protein belongs to the IspG family. The cofactor is [4Fe-4S] cluster.

The enzyme catalyses (2E)-4-hydroxy-3-methylbut-2-enyl diphosphate + oxidized [flavodoxin] + H2O + 2 H(+) = 2-C-methyl-D-erythritol 2,4-cyclic diphosphate + reduced [flavodoxin]. It participates in isoprenoid biosynthesis; isopentenyl diphosphate biosynthesis via DXP pathway; isopentenyl diphosphate from 1-deoxy-D-xylulose 5-phosphate: step 5/6. Converts 2C-methyl-D-erythritol 2,4-cyclodiphosphate (ME-2,4cPP) into 1-hydroxy-2-methyl-2-(E)-butenyl 4-diphosphate. The protein is 4-hydroxy-3-methylbut-2-en-1-yl diphosphate synthase (flavodoxin) of Pseudomonas fluorescens (strain SBW25).